We begin with the raw amino-acid sequence, 424 residues long: Hydrolase ORFZ (424 aa).

Serine 243 functions as the Nucleophile in the catalytic mechanism.

Belongs to the AB hydrolase superfamily. FUS2 hydrolase family. Homodimer.

Its pathway is secondary metabolite biosynthesis. Hydrolyase; part of the gene cluster that mediates the biosynthesis of a tyrosine-derived cytochalasan acting as a fungal signal recognized by resistant rice plants and leads to avirulence in Pi33 resistant rice cultivars. The first step in the pathway is catalyzed by the hybrid PKS-NRPS ACE1, assisted by the enoyl reductase RAP1, that are responsible for fusion of the tyrosine precursor and the polyketide backbone. The polyketide synthase module (PKS) of ACE1 is responsible for the synthesis of the polyketide backbone and the downstream nonribosomal peptide synthetase (NRPS) amidates the carboxyl end of the polyketide with the tyrosine precursor. Because ACE1 lacks a designated enoylreductase (ER) domain, the required activity is provided the enoyl reductase RAP1. Reduction by the hydrolyase ORFZ, followed by dehydration and intra-molecular Diels-Alder cyclization by the Diels-Alderase ORF3 then yield the required isoindolone-fused macrocycle. A number of oxidative steps catalyzed by the tailoring enzymes identified within the cluster, including cytochrome P450 monooxygenases CYP1 to CYP4, the FAD-linked oxidoreductase OXR2 and the short-chain dehydrogenase/reductase OXR1, are further required to afford the final cytochalasans that confer avirulence and which have still to be identified. The monooxygenase CYP1 has been shown to be a site-selective C-18 hydroxylase whereas the function of CYP3 is the site-selective epoxidation of the C-6/C-7 olefin that is present in some intermediate compounds. Finally, SYN2 and RAP2 are not required for avirulence in Pi33 resistant rice cultivars. This Pyricularia oryzae (strain 70-15 / ATCC MYA-4617 / FGSC 8958) (Rice blast fungus) protein is Hydrolase ORFZ.